Reading from the N-terminus, the 348-residue chain is D-alanine--D-alanine ligase (348 aa).

An ATP-grasp domain is found at 132–334; the sequence is KRVLESIGIP…YPDLIEELVT (203 aa). 162-217 contacts ATP; sequence LARLTFPIFVKPANMGSSVGISKAQTKVELRKAIQLALTYDSRVLIEQGVVAREIE. Mg(2+) contacts are provided by D288, E301, and N303.

Belongs to the D-alanine--D-alanine ligase family. The cofactor is Mg(2+). Requires Mn(2+) as cofactor.

It is found in the cytoplasm. The enzyme catalyses 2 D-alanine + ATP = D-alanyl-D-alanine + ADP + phosphate + H(+). It functions in the pathway cell wall biogenesis; peptidoglycan biosynthesis. Its function is as follows. Cell wall formation. This chain is D-alanine--D-alanine ligase, found in Streptococcus pyogenes serotype M6 (strain ATCC BAA-946 / MGAS10394).